A 646-amino-acid chain; its full sequence is Threonine--tRNA ligase (646 aa).

Positions 1–61 (MIKITFPDGS…NEDASVVLYK (61 aa)) constitute a TGS domain. The tract at residues 242–541 (DHRKIGKEMQ…LIEHTAGKFP (300 aa)) is catalytic. 3 residues coordinate Zn(2+): cysteine 337, histidine 388, and histidine 518.

The protein belongs to the class-II aminoacyl-tRNA synthetase family. Homodimer. Zn(2+) serves as cofactor.

The protein resides in the cytoplasm. It catalyses the reaction tRNA(Thr) + L-threonine + ATP = L-threonyl-tRNA(Thr) + AMP + diphosphate + H(+). Its function is as follows. Catalyzes the attachment of threonine to tRNA(Thr) in a two-step reaction: L-threonine is first activated by ATP to form Thr-AMP and then transferred to the acceptor end of tRNA(Thr). Also edits incorrectly charged L-seryl-tRNA(Thr). This is Threonine--tRNA ligase from Bacteroides fragilis (strain YCH46).